The primary structure comprises 92 residues: Small ribosomal subunit protein uS19 (92 aa).

The protein belongs to the universal ribosomal protein uS19 family.

Protein S19 forms a complex with S13 that binds strongly to the 16S ribosomal RNA. This Ruegeria pomeroyi (strain ATCC 700808 / DSM 15171 / DSS-3) (Silicibacter pomeroyi) protein is Small ribosomal subunit protein uS19.